Reading from the N-terminus, the 559-residue chain is YTH domain-containing family protein 1 (559 aa).

Residues M1 to P49 are disordered. At S2 the chain carries N-acetylserine. The span at H24–D33 shows a compositional bias: basic and acidic residues. At S182 the chain carries Phosphoserine. Residues S239–H365 are disordered. Composition is skewed to low complexity over residues P279 to L305 and Q314 to P326. Over residues G343–S361 the composition is skewed to polar residues. In terms of domain architecture, YTH spans G389–I523. RNA-binding positions include K395–Y397, D401, W411–C412, N441, W465, and W470.

The protein belongs to the YTHDF family. YTHDF1 subfamily. As to quaternary structure, interacts with CNOT1; promoting recruitment of the CCR4-NOT complex. Interacts with ribosomes. Interacts with eIF3 (EIF3A or EIF3B). Interacts with YTHDF3. Post-translationally, ubiquitinated by the CUL7-FBXW8 E3 ligase complex leading to degradation. Deubiquitinated and stabilized by USP5 by removing 'Lys-11'-linked polyubiquitination. As to expression, in brain, preferentially expressed in the hippocampus.

It localises to the cytoplasm. Its subcellular location is the P-body. The protein localises to the stress granule. Functionally, specifically recognizes and binds N6-methyladenosine (m6A)-containing mRNAs, and regulates their stability. M6A is a modification present at internal sites of mRNAs and some non-coding RNAs and plays a role in mRNA stability and processing. Acts as a regulator of mRNA stability by promoting degradation of m6A-containing mRNAs via interaction with the CCR4-NOT complex. The YTHDF paralogs (YTHDF1, YTHDF2 and YTHDF3) share m6A-containing mRNAs targets and act redundantly to mediate mRNA degradation and cellular differentiation. Required to facilitate learning and memory formation in the hippocampus by binding to m6A-containing neuronal mRNAs. Acts as a regulator of axon guidance by binding to m6A-containing ROBO3 transcripts. Acts as a negative regulator of antigen cross-presentation in myeloid dendritic cells. In the context of tumorigenesis, negative regulation of antigen cross-presentation limits the anti-tumor response by reducing efficiency of tumor-antigen cross-presentation. Promotes formation of phase-separated membraneless compartments, such as P-bodies or stress granules, by undergoing liquid-liquid phase separation upon binding to mRNAs containing multiple m6A-modified residues: polymethylated mRNAs act as a multivalent scaffold for the binding of YTHDF proteins, juxtaposing their disordered regions and thereby leading to phase separation. The resulting mRNA-YTHDF complexes then partition into different endogenous phase-separated membraneless compartments, such as P-bodies, stress granules or neuronal RNA granules. In Mus musculus (Mouse), this protein is YTH domain-containing family protein 1.